The following is a 427-amino-acid chain: Peptidase B (427 aa).

The Mn(2+) site is built by lysine 195 and aspartate 200. The active site involves lysine 207. Positions 218, 277, and 279 each coordinate Mn(2+). Residue arginine 281 is part of the active site.

This sequence belongs to the peptidase M17 family. In terms of assembly, homohexamer. Mn(2+) is required as a cofactor.

The protein localises to the cytoplasm. The catalysed reaction is Release of an N-terminal amino acid, Xaa, from a peptide or arylamide. Xaa is preferably Glu or Asp but may be other amino acids, including Leu, Met, His, Cys and Gln.. Its function is as follows. Probably plays an important role in intracellular peptide degradation. The protein is Peptidase B of Escherichia coli (strain SE11).